A 142-amino-acid polypeptide reads, in one-letter code: MSTDKKQDESIAEKDWKVELSEQEYYVCREAGTERPFTGVLLDEQRDGLYVCKCCEAPLFPSDTKFDAGCGWPSFYKQLDDGNVDYREDVSHGMRRVEIFCKQCGSHLGHVFPDGPAPTGQRYCVNSLSMTFKGEDNVEVKG.

The MsrB domain maps to 13 to 135 (EKDWKVELSE…NSLSMTFKGE (123 aa)). Zn(2+) contacts are provided by Cys-52, Cys-55, Cys-101, and Cys-104. Catalysis depends on Cys-124, which acts as the Nucleophile.

The protein belongs to the MsrB Met sulfoxide reductase family. Zn(2+) is required as a cofactor.

It catalyses the reaction L-methionyl-[protein] + [thioredoxin]-disulfide + H2O = L-methionyl-(R)-S-oxide-[protein] + [thioredoxin]-dithiol. The chain is Peptide methionine sulfoxide reductase MsrB from Alteromonas mediterranea (strain DSM 17117 / CIP 110805 / LMG 28347 / Deep ecotype).